Reading from the N-terminus, the 591-residue chain is Aspartate--tRNA(Asp/Asn) ligase (591 aa).

Glu175 contacts L-aspartate. The segment at 199–202 is aspartate; sequence QQFK. Residues Arg221 and His453 each coordinate L-aspartate. 221 to 223 is an ATP binding site; the sequence is RDE. Residue Glu486 participates in ATP binding. Residue Arg493 coordinates L-aspartate. 538-541 contributes to the ATP binding site; sequence GIDR.

Belongs to the class-II aminoacyl-tRNA synthetase family. Type 1 subfamily. As to quaternary structure, homodimer.

It localises to the cytoplasm. The catalysed reaction is tRNA(Asx) + L-aspartate + ATP = L-aspartyl-tRNA(Asx) + AMP + diphosphate. Functionally, aspartyl-tRNA synthetase with relaxed tRNA specificity since it is able to aspartylate not only its cognate tRNA(Asp) but also tRNA(Asn). Reaction proceeds in two steps: L-aspartate is first activated by ATP to form Asp-AMP and then transferred to the acceptor end of tRNA(Asp/Asn). In Paracoccus denitrificans (strain Pd 1222), this protein is Aspartate--tRNA(Asp/Asn) ligase.